Reading from the N-terminus, the 278-residue chain is Gamma carbonic anhydrase 2, mitochondrial (278 aa).

The transit peptide at 1 to 43 (MGTLGRAIYTVGNWIRGTGQALDRVGSLLQGSHRIEEHLSRHR) directs the protein to the mitochondrion. Residues 86–88 (RGD) and 101–102 (QD) each bind substrate. Positions 107, 130, and 135 each coordinate Zn(2+). Asparagine 209 contacts substrate.

The protein belongs to the gamma-class carbonic anhydrase family. In terms of assembly, homotrimer. Component of the mitochondrial oxidoreductase respiratory chain complex I; element of the extra matrix-exposed domain, which is attached to the membrane arm of this complex. Interacts with GAMMACAL1 and GAMMACAL2. Requires Zn(2+) as cofactor. As to expression, constitutively expressed in roots and leaves, with higher levels in flowers, particularly in tapetal tissue of anthers, inflorescence (IM) and floral meristems (FM).

It is found in the mitochondrion membrane. Functionally, enzyme involved in the catabolism of H(2)CO(3) but that does not mediates the reversible hydration of carbon dioxide. Mediates complex I assembly in mitochondria and respiration. Binds HCO(3)-. Required for male fertility during anther development and dehiscence to regulate the secondary thickenings of the endothecial cell wall, probably by modulating H(2)O(2)-dependent lignin polymerization. This chain is Gamma carbonic anhydrase 2, mitochondrial (GAMMACA2), found in Arabidopsis thaliana (Mouse-ear cress).